The chain runs to 239 residues: Ribonuclease PH (239 aa).

Phosphate is bound by residues Arg87 and 125-127 (GTR).

Belongs to the RNase PH family. As to quaternary structure, homohexameric ring arranged as a trimer of dimers.

The catalysed reaction is tRNA(n+1) + phosphate = tRNA(n) + a ribonucleoside 5'-diphosphate. In terms of biological role, phosphorolytic 3'-5' exoribonuclease that plays an important role in tRNA 3'-end maturation. Removes nucleotide residues following the 3'-CCA terminus of tRNAs; can also add nucleotides to the ends of RNA molecules by using nucleoside diphosphates as substrates, but this may not be physiologically important. Probably plays a role in initiation of 16S rRNA degradation (leading to ribosome degradation) during starvation. The chain is Ribonuclease PH from Cyanothece sp. (strain PCC 7425 / ATCC 29141).